The primary structure comprises 500 residues: Citrate lyase alpha chain (500 aa).

As to quaternary structure, oligomer with a subunit composition of (alpha,beta,gamma)6.

The protein resides in the cytoplasm. It carries out the reaction citrate = oxaloacetate + acetate. The enzyme catalyses citrate + acetyl-CoA = (3S)-citryl-CoA + acetate. In terms of biological role, represents a citrate:acetyl-ACP transferase. This is Citrate lyase alpha chain (citF) from Haemophilus influenzae (strain ATCC 51907 / DSM 11121 / KW20 / Rd).